Consider the following 304-residue polypeptide: Sulfate adenylyltransferase subunit 2 (304 aa).

The protein belongs to the PAPS reductase family. CysD subfamily. As to quaternary structure, heterodimer composed of CysD, the smaller subunit, and CysN.

The enzyme catalyses sulfate + ATP + H(+) = adenosine 5'-phosphosulfate + diphosphate. Its pathway is sulfur metabolism; hydrogen sulfide biosynthesis; sulfite from sulfate: step 1/3. In terms of biological role, with CysN forms the ATP sulfurylase (ATPS) that catalyzes the adenylation of sulfate producing adenosine 5'-phosphosulfate (APS) and diphosphate, the first enzymatic step in sulfur assimilation pathway. APS synthesis involves the formation of a high-energy phosphoric-sulfuric acid anhydride bond driven by GTP hydrolysis by CysN coupled to ATP hydrolysis by CysD. The protein is Sulfate adenylyltransferase subunit 2 of Acinetobacter baumannii (strain SDF).